Consider the following 209-residue polypeptide: Urease accessory protein UreG (209 aa).

14–21 (GPVGSGKT) serves as a coordination point for GTP.

Belongs to the SIMIBI class G3E GTPase family. UreG subfamily. Homodimer. UreD, UreF and UreG form a complex that acts as a GTP-hydrolysis-dependent molecular chaperone, activating the urease apoprotein by helping to assemble the nickel containing metallocenter of UreC. The UreE protein probably delivers the nickel.

It localises to the cytoplasm. Facilitates the functional incorporation of the urease nickel metallocenter. This process requires GTP hydrolysis, probably effectuated by UreG. The sequence is that of Urease accessory protein UreG from Rhodopseudomonas palustris (strain ATCC BAA-98 / CGA009).